Reading from the N-terminus, the 348-residue chain is Uroporphyrinogen decarboxylase (348 aa).

Residues 27 to 31, phenylalanine 46, aspartate 76, tyrosine 152, serine 207, and histidine 320 each bind substrate; that span reads RQAGR.

Belongs to the uroporphyrinogen decarboxylase family. As to quaternary structure, homodimer.

Its subcellular location is the cytoplasm. It catalyses the reaction uroporphyrinogen III + 4 H(+) = coproporphyrinogen III + 4 CO2. It functions in the pathway porphyrin-containing compound metabolism; protoporphyrin-IX biosynthesis; coproporphyrinogen-III from 5-aminolevulinate: step 4/4. Functionally, catalyzes the decarboxylation of four acetate groups of uroporphyrinogen-III to yield coproporphyrinogen-III. The sequence is that of Uroporphyrinogen decarboxylase from Bacillus mycoides (strain KBAB4) (Bacillus weihenstephanensis).